The primary structure comprises 494 residues: GDP-fucose protein O-fucosyltransferase 4 (494 aa).

Residues 1 to 7 (MAARYTE) lie on the Cytoplasmic side of the membrane. The helical; Signal-anchor for type II membrane protein transmembrane segment at 8 to 24 (AVLAALGVLSVCSASSS) threads the bilayer. Over 25–494 (SGSGASGKAG…EIFMKRNKNL (470 aa)) the chain is Lumenal. N-linked (GlcNAc...) asparagine glycosylation is present at N167. A disulfide bond links C390 and C393.

This sequence belongs to the glycosyltransferase 10 family.

Its subcellular location is the endoplasmic reticulum membrane. The enzyme catalyses L-threonyl-[protein] + GDP-beta-L-fucose = 3-O-(alpha-L-fucosyl)-L-threonyl-[protein] + GDP + H(+). It carries out the reaction L-seryl-[protein] + GDP-beta-L-fucose = 3-O-(alpha-L-fucosyl)-L-seryl-[protein] + GDP + H(+). Its pathway is protein modification; protein glycosylation. Its function is as follows. Protein O-fucosyltransferase that specifically catalyzes O-fucosylation of serine or threonine residues in EMI domains of target proteins, such as MMRN1, MMRN2 and EMID1. Attaches fucose through an O-glycosidic linkage. O-fucosylation of EMI domain-containing proteins may be required for facilitating protein folding and secretion. Also shows minor alpha-(1,3)-fucosyltransferase activity toward activity toward biantennary N-glycan acceptors. However, this was tested with a library of synthetic substrates and this activity is unsure in vivo. This is GDP-fucose protein O-fucosyltransferase 4 (Fut11) from Rattus norvegicus (Rat).